The chain runs to 153 residues: 6,7-dimethyl-8-ribityllumazine synthase (153 aa).

5-amino-6-(D-ribitylamino)uracil is bound by residues F22, 56 to 58 (AFE), and 80 to 82 (TVI). Residue 85-86 (ST) participates in (2S)-2-hydroxy-3-oxobutyl phosphate binding. H88 (proton donor) is an active-site residue. Residue F113 coordinates 5-amino-6-(D-ribitylamino)uracil. Residue R127 participates in (2S)-2-hydroxy-3-oxobutyl phosphate binding.

It belongs to the DMRL synthase family. Forms an icosahedral capsid composed of 60 subunits, arranged as a dodecamer of pentamers.

The enzyme catalyses (2S)-2-hydroxy-3-oxobutyl phosphate + 5-amino-6-(D-ribitylamino)uracil = 6,7-dimethyl-8-(1-D-ribityl)lumazine + phosphate + 2 H2O + H(+). The protein operates within cofactor biosynthesis; riboflavin biosynthesis; riboflavin from 2-hydroxy-3-oxobutyl phosphate and 5-amino-6-(D-ribitylamino)uracil: step 1/2. Catalyzes the formation of 6,7-dimethyl-8-ribityllumazine by condensation of 5-amino-6-(D-ribitylamino)uracil with 3,4-dihydroxy-2-butanone 4-phosphate. This is the penultimate step in the biosynthesis of riboflavin. The chain is 6,7-dimethyl-8-ribityllumazine synthase from Glaesserella parasuis serovar 5 (strain SH0165) (Haemophilus parasuis).